Reading from the N-terminus, the 372-residue chain is Probable L-tyrosine/L-aspartate decarboxylase (372 aa).

Lys-215 carries the N6-(pyridoxal phosphate)lysine modification.

This sequence belongs to the group II decarboxylase family. MfnA subfamily. Pyridoxal 5'-phosphate serves as cofactor.

It carries out the reaction L-tyrosine + H(+) = tyramine + CO2. The catalysed reaction is L-aspartate + H(+) = beta-alanine + CO2. The protein operates within cofactor biosynthesis; methanofuran biosynthesis. It functions in the pathway cofactor biosynthesis; coenzyme A biosynthesis. In terms of biological role, catalyzes the decarboxylation of L-tyrosine to produce tyramine for methanofuran biosynthesis. Can also catalyze the decarboxylation of L-aspartate to produce beta-alanine for coenzyme A (CoA) biosynthesis. The polypeptide is Probable L-tyrosine/L-aspartate decarboxylase (Methanopyrus kandleri (strain AV19 / DSM 6324 / JCM 9639 / NBRC 100938)).